Reading from the N-terminus, the 68-residue chain is Small ribosomal subunit protein bS21 (68 aa).

It belongs to the bacterial ribosomal protein bS21 family.

This Endomicrobium trichonymphae protein is Small ribosomal subunit protein bS21.